We begin with the raw amino-acid sequence, 562 residues long: Teichoic acid ribitol-phosphate polymerase TarL (562 aa).

This sequence belongs to the CDP-glycerol glycerophosphotransferase family.

It localises to the cell membrane. It catalyses the reaction 4-O-[di(2R)-glycerylphospho]-N-acetyl-beta-D-mannosaminyl-(1-&gt;4)-N-acetyl-alpha-D-glucosaminyl di-trans,octa-cis-undecaprenyl diphosphate + n CDP-L-ribitol = 4-O-[(D-ribitylphospho)(n)-di{(2R)-glycerylphospho}]-N-acetyl-beta-D-mannosaminyl-(1-&gt;4)-N-acetyl-alpha-D-glucosaminyl di-trans,octa-cis-undecaprenyl diphosphate + n CMP + n H(+). It participates in cell wall biogenesis; poly(ribitol phosphate) teichoic acid biosynthesis. Its function is as follows. Responsible for the polymerization of the main chain of the major teichoic acid by sequential transfer of ribitol phosphate units from CDP-ribitol to the second glycerol phosphate attached to the disaccharide linkage unit. Synthesizes polymers of more than 40 ribitol phosphate units in length. This chain is Teichoic acid ribitol-phosphate polymerase TarL (tarL), found in Staphylococcus aureus (strain NCTC 8325 / PS 47).